The chain runs to 365 residues: Isopentenyl-diphosphate delta-isomerase (365 aa).

Residue arginine 8–lysine 9 participates in substrate binding. FMN-binding positions include serine 67–threonine 69, serine 97, and asparagine 126. A substrate-binding site is contributed by serine 97–arginine 99. Residue glutamine 160 participates in substrate binding. Glutamate 161 is a binding site for Mg(2+). Residues lysine 192, threonine 222, glycine 272–arginine 274, and alanine 293–leucine 294 each bind FMN.

Belongs to the IPP isomerase type 2 family. As to quaternary structure, homooctamer. Dimer of tetramers. Requires FMN as cofactor. The cofactor is NADPH. Mg(2+) serves as cofactor.

The protein localises to the cytoplasm. The enzyme catalyses isopentenyl diphosphate = dimethylallyl diphosphate. Functionally, involved in the biosynthesis of isoprenoids. Catalyzes the 1,3-allylic rearrangement of the homoallylic substrate isopentenyl (IPP) to its allylic isomer, dimethylallyl diphosphate (DMAPP). This Methanosarcina barkeri (strain Fusaro / DSM 804) protein is Isopentenyl-diphosphate delta-isomerase.